Here is a 474-residue protein sequence, read N- to C-terminus: Siroheme synthase (474 aa).

Residues 1-202 are precorrin-2 dehydrogenase /sirohydrochlorin ferrochelatase; sequence MEYLPIFIDL…GRPKEANKVL (202 aa). NAD(+) contacts are provided by residues 22 to 23 and 41 to 42; these read AV and PA. Ser-126 carries the phosphoserine modification. The uroporphyrinogen-III C-methyltransferase stretch occupies residues 218–474; sequence GHVTLVGAGP…YLINSIINLI (257 aa). Pro-227 is a binding site for S-adenosyl-L-methionine. The active-site Proton acceptor is Asp-250. The active-site Proton donor is the Lys-272. S-adenosyl-L-methionine is bound by residues 303–305, Ile-308, 333–334, Met-385, and Gly-414; these read GGD and TA.

This sequence in the N-terminal section; belongs to the precorrin-2 dehydrogenase / sirohydrochlorin ferrochelatase family. In the C-terminal section; belongs to the precorrin methyltransferase family.

The catalysed reaction is uroporphyrinogen III + 2 S-adenosyl-L-methionine = precorrin-2 + 2 S-adenosyl-L-homocysteine + H(+). The enzyme catalyses precorrin-2 + NAD(+) = sirohydrochlorin + NADH + 2 H(+). It catalyses the reaction siroheme + 2 H(+) = sirohydrochlorin + Fe(2+). The protein operates within cofactor biosynthesis; adenosylcobalamin biosynthesis; precorrin-2 from uroporphyrinogen III: step 1/1. It functions in the pathway cofactor biosynthesis; adenosylcobalamin biosynthesis; sirohydrochlorin from precorrin-2: step 1/1. Its pathway is porphyrin-containing compound metabolism; siroheme biosynthesis; precorrin-2 from uroporphyrinogen III: step 1/1. It participates in porphyrin-containing compound metabolism; siroheme biosynthesis; siroheme from sirohydrochlorin: step 1/1. The protein operates within porphyrin-containing compound metabolism; siroheme biosynthesis; sirohydrochlorin from precorrin-2: step 1/1. Its function is as follows. Multifunctional enzyme that catalyzes the SAM-dependent methylations of uroporphyrinogen III at position C-2 and C-7 to form precorrin-2 via precorrin-1. Then it catalyzes the NAD-dependent ring dehydrogenation of precorrin-2 to yield sirohydrochlorin. Finally, it catalyzes the ferrochelation of sirohydrochlorin to yield siroheme. This is Siroheme synthase from Blochmanniella pennsylvanica (strain BPEN).